We begin with the raw amino-acid sequence, 317 residues long: Flagellar hook-associated protein 3 (317 aa).

Belongs to the bacterial flagellin family.

Its subcellular location is the secreted. The protein resides in the bacterial flagellum. The chain is Flagellar hook-associated protein 3 (flgL) from Salmonella typhimurium (strain LT2 / SGSC1412 / ATCC 700720).